The chain runs to 24 residues: Humanin-like 10 (24 aa).

This sequence belongs to the humanin family. In terms of tissue distribution, expressed in mature brain, thyroid gland and testis.

It is found in the secreted. It localises to the cytoplasm. Its function is as follows. Plays a role as a neuroprotective and antiapoptotic factor. The protein is Humanin-like 10 of Homo sapiens (Human).